We begin with the raw amino-acid sequence, 119 residues long: Large ribosomal subunit protein uL18 (119 aa).

The interval 1–20 (MSQIDKAARRQKIKARSRAT) is disordered. Residues 9–19 (RRQKIKARSRA) are compositionally biased toward basic residues.

This sequence belongs to the universal ribosomal protein uL18 family. In terms of assembly, part of the 50S ribosomal subunit; part of the 5S rRNA/L5/L18/L25 subcomplex. Contacts the 5S and 23S rRNAs.

In terms of biological role, this is one of the proteins that bind and probably mediate the attachment of the 5S RNA into the large ribosomal subunit, where it forms part of the central protuberance. The polypeptide is Large ribosomal subunit protein uL18 (Chlorobaculum parvum (strain DSM 263 / NCIMB 8327) (Chlorobium vibrioforme subsp. thiosulfatophilum)).